The sequence spans 954 residues: Glycine dehydrogenase (decarboxylating) (954 aa).

Lys704 is subject to N6-(pyridoxal phosphate)lysine.

The protein belongs to the GcvP family. In terms of assembly, the glycine cleavage system is composed of four proteins: P, T, L and H. Requires pyridoxal 5'-phosphate as cofactor.

The catalysed reaction is N(6)-[(R)-lipoyl]-L-lysyl-[glycine-cleavage complex H protein] + glycine + H(+) = N(6)-[(R)-S(8)-aminomethyldihydrolipoyl]-L-lysyl-[glycine-cleavage complex H protein] + CO2. The glycine cleavage system catalyzes the degradation of glycine. The P protein binds the alpha-amino group of glycine through its pyridoxal phosphate cofactor; CO(2) is released and the remaining methylamine moiety is then transferred to the lipoamide cofactor of the H protein. The protein is Glycine dehydrogenase (decarboxylating) of Rhizobium etli (strain ATCC 51251 / DSM 11541 / JCM 21823 / NBRC 15573 / CFN 42).